The sequence spans 640 residues: Probable serine/threonine-protein kinase samkA (640 aa).

The SAM domain maps to 21 to 84 (WNNEKIIKWL…SEFEILKNNY (64 aa)). Residues 73–100 (FKSEFEILKNNYDNNNNNNNNNNNNNNN) are a coiled coil. The disordered stretch occupies residues 84 to 165 (YDNNNNNNNN…INFNSNSNIT (82 aa)). The Protein kinase domain maps to 191 to 437 (YEYVESISLG…SKDLQKLSWF (247 aa)). Residues 197-205 (ISLGVFSVV) and K221 each bind ATP. D312 (proton acceptor) is an active-site residue. Positions 448-482 (QELTKSTTNTTTTTTTTTTPPPPPSPSSSSPSMNE) are disordered. Residues 453–465 (STTNTTTTTTTTT) are compositionally biased toward low complexity.

Belongs to the protein kinase superfamily. Ser/Thr protein kinase family.

It carries out the reaction L-seryl-[protein] + ATP = O-phospho-L-seryl-[protein] + ADP + H(+). The catalysed reaction is L-threonyl-[protein] + ATP = O-phospho-L-threonyl-[protein] + ADP + H(+). This chain is Probable serine/threonine-protein kinase samkA (samkA), found in Dictyostelium discoideum (Social amoeba).